We begin with the raw amino-acid sequence, 319 residues long: Tyrosine phosphatase-like protein N3 (319 aa).

Positions 7 to 285 constitute a Tyrosine-protein phosphatase domain; sequence SNLSIHEFWR…LIINKILLHS (279 aa).

Belongs to the protein-tyrosine phosphatase family.

The chain is Tyrosine phosphatase-like protein N3 (N7) from Microplitis demolitor bracovirus (isolate Webb) (MdBV).